Reading from the N-terminus, the 125-residue chain is Putative zinc finger A20 and AN1 domain-containing stress-associated protein 8 (125 aa).

An A20-type zinc finger spans residues 2–36 (TGEPSLCIRGCGFFSTSQTKNLCSKCYNDFLKDES). Residues cysteine 8, cysteine 12, cysteine 24, cysteine 27, cysteine 80, cysteine 82, histidine 96, and cysteine 98 each coordinate Zn(2+). The AN1-type; degenerate zinc finger occupies 61–106 (LGSKGGCACKKKVGLLGFHCRCGHLFFASHRYPEEHSCPSDYKSAA).

Functionally, may be involved in environmental stress response. This chain is Putative zinc finger A20 and AN1 domain-containing stress-associated protein 8 (SAP8), found in Arabidopsis thaliana (Mouse-ear cress).